Here is a 157-residue protein sequence, read N- to C-terminus: Endoribonuclease YbeY (157 aa).

3 residues coordinate Zn(2+): His114, His118, and His124.

The protein belongs to the endoribonuclease YbeY family. Requires Zn(2+) as cofactor.

It localises to the cytoplasm. In terms of biological role, single strand-specific metallo-endoribonuclease involved in late-stage 70S ribosome quality control and in maturation of the 3' terminus of the 16S rRNA. The polypeptide is Endoribonuclease YbeY (Salmonella agona (strain SL483)).